Consider the following 256-residue polypeptide: Geranylgeranylglyceryl phosphate synthase (256 aa).

Residues aspartate 28 and serine 53 each contribute to the Mg(2+) site. Residues 172–178 (YLEAGSG), 203–204 (GG), and 225–226 (GT) each bind sn-glycerol 1-phosphate.

This sequence belongs to the GGGP/HepGP synthase family. Group II subfamily. The cofactor is Mg(2+).

The protein localises to the cytoplasm. The enzyme catalyses sn-glycerol 1-phosphate + (2E,6E,10E)-geranylgeranyl diphosphate = sn-3-O-(geranylgeranyl)glycerol 1-phosphate + diphosphate. Its pathway is membrane lipid metabolism; glycerophospholipid metabolism. Its function is as follows. Prenyltransferase that catalyzes the transfer of the geranylgeranyl moiety of geranylgeranyl diphosphate (GGPP) to the C3 hydroxyl of sn-glycerol-1-phosphate (G1P). This reaction is the first ether-bond-formation step in the biosynthesis of archaeal membrane lipids. This Methanococcus maripaludis (strain DSM 14266 / JCM 13030 / NBRC 101832 / S2 / LL) protein is Geranylgeranylglyceryl phosphate synthase.